Here is a 196-residue protein sequence, read N- to C-terminus: Pyridoxal 5'-phosphate synthase subunit PdxT (196 aa).

47 to 49 lines the L-glutamine pocket; sequence GES. Catalysis depends on Cys-79, which acts as the Nucleophile. Residues Arg-106 and 134–135 contribute to the L-glutamine site; that span reads IR. Active-site charge relay system residues include His-170 and Glu-172.

This sequence belongs to the glutaminase PdxT/SNO family. In the presence of PdxS, forms a dodecamer of heterodimers. Only shows activity in the heterodimer.

The catalysed reaction is aldehydo-D-ribose 5-phosphate + D-glyceraldehyde 3-phosphate + L-glutamine = pyridoxal 5'-phosphate + L-glutamate + phosphate + 3 H2O + H(+). The enzyme catalyses L-glutamine + H2O = L-glutamate + NH4(+). The protein operates within cofactor biosynthesis; pyridoxal 5'-phosphate biosynthesis. Functionally, catalyzes the hydrolysis of glutamine to glutamate and ammonia as part of the biosynthesis of pyridoxal 5'-phosphate. The resulting ammonia molecule is channeled to the active site of PdxS. The sequence is that of Pyridoxal 5'-phosphate synthase subunit PdxT from Bacillus thuringiensis subsp. konkukian (strain 97-27).